Here is a 215-residue protein sequence, read N- to C-terminus: ATP phosphoribosyltransferase (215 aa).

Belongs to the ATP phosphoribosyltransferase family. Short subfamily. Heteromultimer composed of HisG and HisZ subunits.

The protein localises to the cytoplasm. It catalyses the reaction 1-(5-phospho-beta-D-ribosyl)-ATP + diphosphate = 5-phospho-alpha-D-ribose 1-diphosphate + ATP. The protein operates within amino-acid biosynthesis; L-histidine biosynthesis; L-histidine from 5-phospho-alpha-D-ribose 1-diphosphate: step 1/9. Catalyzes the condensation of ATP and 5-phosphoribose 1-diphosphate to form N'-(5'-phosphoribosyl)-ATP (PR-ATP). Has a crucial role in the pathway because the rate of histidine biosynthesis seems to be controlled primarily by regulation of HisG enzymatic activity. The chain is ATP phosphoribosyltransferase from Prochlorococcus marinus subsp. pastoris (strain CCMP1986 / NIES-2087 / MED4).